Reading from the N-terminus, the 304-residue chain is KIN17-like protein (304 aa).

The C2H2-type zinc finger occupies 26–50 (WYCSACQKQMRDENGFKCHTQSEGH). 2 disordered regions span residues 204-228 (IDLS…SAQN) and 261-291 (LNKS…DIIA).

The protein belongs to the KIN17 family.

Its subcellular location is the nucleus. The protein resides in the nucleolus. This chain is KIN17-like protein, found in Schizosaccharomyces pombe (strain 972 / ATCC 24843) (Fission yeast).